The primary structure comprises 695 residues: Elongation factor G 1 (695 aa).

The 276-residue stretch at A5–T280 folds into the tr-type G domain. GTP contacts are provided by residues A14–T21, D78–H82, and N132–D135.

The protein belongs to the TRAFAC class translation factor GTPase superfamily. Classic translation factor GTPase family. EF-G/EF-2 subfamily.

It is found in the cytoplasm. Its function is as follows. Catalyzes the GTP-dependent ribosomal translocation step during translation elongation. During this step, the ribosome changes from the pre-translocational (PRE) to the post-translocational (POST) state as the newly formed A-site-bound peptidyl-tRNA and P-site-bound deacylated tRNA move to the P and E sites, respectively. Catalyzes the coordinated movement of the two tRNA molecules, the mRNA and conformational changes in the ribosome. The protein is Elongation factor G 1 of Pseudoalteromonas atlantica (strain T6c / ATCC BAA-1087).